Here is a 348-residue protein sequence, read N- to C-terminus: tRNA N6-adenosine threonylcarbamoyltransferase (348 aa).

2 residues coordinate Fe cation: histidine 120 and histidine 124. Residues 143–147, aspartate 176, glycine 189, and asparagine 282 each bind substrate; that span reads LVSGG. A Fe cation-binding site is contributed by aspartate 310.

This sequence belongs to the KAE1 / TsaD family. It depends on Fe(2+) as a cofactor.

The protein resides in the cytoplasm. It catalyses the reaction L-threonylcarbamoyladenylate + adenosine(37) in tRNA = N(6)-L-threonylcarbamoyladenosine(37) in tRNA + AMP + H(+). In terms of biological role, required for the formation of a threonylcarbamoyl group on adenosine at position 37 (t(6)A37) in tRNAs that read codons beginning with adenine. Is involved in the transfer of the threonylcarbamoyl moiety of threonylcarbamoyl-AMP (TC-AMP) to the N6 group of A37, together with TsaE and TsaB. TsaD likely plays a direct catalytic role in this reaction. The sequence is that of tRNA N6-adenosine threonylcarbamoyltransferase from Paracidovorax citrulli (strain AAC00-1) (Acidovorax citrulli).